A 474-amino-acid polypeptide reads, in one-letter code: Viral protein TPX (474 aa).

The disordered stretch occupies residues 268-474 (VTVTPISSPS…TPTSTTSSNI (207 aa)). The span at 275–365 (SPSPTPTPTP…PTPTPTPTPT (91 aa)) shows a compositional bias: pro residues. The Thr-Pro(N) repeat unit spans residues 278-367 (PTPTPTPTPT…PTPTPTPTPT (90 aa)). A 3 Thr-Pro repeats regions and two near identical repeats region spans residues 278-467 (PTPTPTPTPT…PTPTPTPTPT (190 aa)). The segment at residues 368–377 (YDITYVVFDV) is a repeat. One copy of the Thr-Pro(N) repeat lies at 378–436 (TPSPTPTPTPTPTPTPTPTPTPTPTPTPTPTPTPTPTPTPTPTPTPTPTPTPTPTPTPT). The span at 380-434 (SPTPTPTPTPTPTPTPTPTPTPTPTPTPTPTPTPTPTPTPTPTPTPTPTPTPTPT) shows a compositional bias: pro residues. The segment at residues 437 to 446 (YDITYVIFDV) is a repeat. The stretch at 447-467 (TPSPTPTPTPTPTPTPTPTPT) is one Thr-Pro(N) repeat. Residues 449-465 (SPTPTPTPTPTPTPTPT) show a composition bias toward pro residues.

The chain is Viral protein TPX from Thermoproteus tenax virus 1 (strain VT3) (TTV1).